The chain runs to 387 residues: Sulfopyruvate decarboxylase (387 aa).

This sequence belongs to the TPP enzyme family. Thiamine diphosphate serves as cofactor.

The enzyme catalyses 3-sulfopyruvate + H(+) = sulfoacetaldehyde + CO2. It functions in the pathway cofactor biosynthesis; coenzyme M biosynthesis. In terms of biological role, involved in the biosynthesis of the coenzyme M (2-mercaptoethanesulfonic acid). Catalyzes the decarboxylation of sulfopyruvate to sulfoacetaldehyde. Is not able to decarboxylate the analogous compounds 2-oxoglutarate or 2-oxosuberate. This chain is Sulfopyruvate decarboxylase, found in Methanosarcina acetivorans (strain ATCC 35395 / DSM 2834 / JCM 12185 / C2A).